We begin with the raw amino-acid sequence, 317 residues long: Protease HtpX homolog (317 aa).

2 helical membrane-spanning segments follow: residues 14–34 (LMGI…LYYI) and 41–61 (IALL…QWLF). Histidine 146 is a binding site for Zn(2+). Residue glutamate 147 is part of the active site. Histidine 150 contributes to the Zn(2+) binding site. 2 consecutive transmembrane segments (helical) span residues 158–178 (MLLA…TLLF) and 189–209 (IVLL…LILA). Glutamate 215 contacts Zn(2+).

This sequence belongs to the peptidase M48B family. The cofactor is Zn(2+).

It is found in the cell membrane. This Thermoplasma acidophilum (strain ATCC 25905 / DSM 1728 / JCM 9062 / NBRC 15155 / AMRC-C165) protein is Protease HtpX homolog.